We begin with the raw amino-acid sequence, 686 residues long: Cation channel sperm-associated protein 1 (686 aa).

Residues 1–15 (MDQSSRRDESYHETH) show a composition bias toward basic and acidic residues. Disordered regions lie at residues 1–57 (MDQS…QQPY), 97–177 (TLPN…NRDH), 207–271 (DHHH…KSTA), and 289–318 (QSRESLRESASLSEGEDHVQKRKKAQRAHK). The Cytoplasmic segment spans residues 1 to 351 (MDQSSRRDES…QMILSLTQSL (351 aa)). The segment covering 25 to 35 (SHPHPHPHPTL) has biased composition (basic residues). Residues 128–142 (DPNHHPHQDDPHRPS) show a composition bias toward basic and acidic residues. Polar residues predominate over residues 147-160 (HPSSTGSHQGTTHQ). Composition is skewed to basic residues over residues 211–229 (EGHHAHSHHGEHPHHKEQR) and 235–244 (HMHHHIHHRS). The segment covering 245-271 (PSASQLSHKSHSTLATSPSHVGSKSTA) has biased composition (polar residues). Residues 308-318 (QKRKKAQRAHK) show a composition bias toward basic residues. A helical membrane pass occupies residues 352–373 (GFETFIFIVVCLNTVILVAQTF). Residues 374–382 (TELEIRGEW) are Extracellular-facing. A helical transmembrane segment spans residues 383-404 (YFMVLDSIFLSIYVLEAVLKLI). The Cytoplasmic segment spans residues 405–412 (ALGLEYFY). Residues 413-435 (DPWNNLDFFIMVMAVLDFVLLQI) form a helical membrane-spanning segment. The Extracellular segment spans residues 436–446 (NSLSYSFYNHS). Residues 447 to 469 (LFRILKVFKSMRALRAIRVLRRL) traverse the membrane as a helical segment. Over 470–487 (SILTSLHEVAGTLSGSLP) the chain is Cytoplasmic. Residues 488 to 510 (SITAILTLMFTCLFLFSVVLRAL) traverse the membrane as a helical segment. The Extracellular segment spans residues 511-521 (FQDSDPKRFQN). Positions 522 to 534 (IFTTLFTLFTMLT) form an intramembrane region, helical; Pore-forming. Over 535 to 551 (LDDWSLIYIDNRAQGAW) the chain is Extracellular. Residues 552–577 (YIIPILMIYIVIQYFIFLNLVIAVLV) form a helical membrane-spanning segment. The Cytoplasmic portion of the chain corresponds to 578–686 (DNFQMALLKG…FEAGDDDYGK (109 aa)).

Belongs to the cation channel sperm-associated (TC 1.A.1.19) family. As to quaternary structure, component of the CatSper complex or CatSpermasome composed of the core pore-forming members CATSPER1, CATSPER2, CATSPER3 and CATSPER4 as well as auxiliary members CATSPERB, CATSPERG2, CATSPERD, CATSPERE, CATSPERZ, C2CD6/CATSPERT, SLCO6C1, TMEM249, TMEM262 and EFCAB9. HSPA1 may be an additional auxiliary complex member. The core complex members CATSPER1, CATSPER2, CATSPER3 and CATSPER4 form a heterotetrameric channel. The auxiliary CATSPERB, CATSPERG2, CATSPERD and CATSPERE subunits form a pavilion-like structure over the pore which stabilizes the complex through interactions with CATSPER4, CATSPER3, CATSPER1 and CATSPER2 respectively. SLCO6C1 interacts with CATSPERE, and TMEM262/CATSPERH interacts with CATSPERB, further stabilizing the complex. C2CD6/CATSPERT interacts at least with CATSPERD and is required for targeting the CatSper complex in the flagellar membrane. Interacts with Ca(v)3.3/CACNA1I, leading to suppression of T-type calcium channel activity. As to expression, testis-specific.

The protein localises to the cell projection. The protein resides in the cilium. It is found in the flagellum membrane. The enzyme catalyses Ca(2+)(in) = Ca(2+)(out). Its activity is regulated as follows. Activated by intracellular alkalinization. In contrast to the human ortholog, not activated by progesterone. Its function is as follows. Pore-forming subunit of the CatSper complex, a sperm-specific voltage-gated calcium channel that plays a central role in sperm cell hyperactivation. Controls calcium entry to mediate the hyperactivated motility, a step needed for sperm motility which is essential late in the preparation of sperm for fertilization. The protein is Cation channel sperm-associated protein 1 (Catsper1) of Mus musculus (Mouse).